A 215-amino-acid polypeptide reads, in one-letter code: Sodium channel regulatory subunit beta-3 (215 aa).

The signal sequence occupies residues 1-24 (MPAFNRLLPLASLVLIYWVRVCFP). Positions 25–138 (VCVEVPSETE…EAHRPFVKTT (114 aa)) constitute an Ig-like C2-type domain. The Extracellular segment spans residues 25 to 156 (VCVEVPSETE…EEAGEDFTSV (132 aa)). Intrachain disulfides connect Cys-26–Cys-48 and Cys-45–Cys-120. N-linked (GlcNAc...) asparagine glycans are attached at residues Asn-95, Asn-109, Asn-113, and Asn-121. A helical membrane pass occupies residues 157 to 178 (VSEIMMYILLVFLTLWLFIEMI). The Cytoplasmic segment spans residues 179–215 (YCYRKVSKAEEAAQENASDYLAIPSENKENSVVPVEE).

It belongs to the sodium channel auxiliary subunit SCN3B (TC 8.A.17) family. As to quaternary structure, a voltage-gated sodium (Nav) channel consists of an ion-conducting pore-forming alpha subunit functional on its own that is regulated by one or more beta subunits. Forms homodimers and homotrimers. SCN3B is non-covalently associated with alpha subunits and induces the formation of alpha subunit oligomers, including trimers. Interacts with SCN5A/Nav1.5; regulatory subunit of SCN5A/Nav1.5. Interacts with SCN7A/Nav2.1; probable regulatory subunit of SCN7A/Nav2.1. Interacts with SCN10A; regulatory subunit of SCN10A/Nav1.8. Interacts with NFASC; probably involved in targeting the sodium channels to the nodes of Ranvier. Post-translationally, intramolecular disulfide bonds favor the voltage-gated sodium channel oligomeric complex assembly. In terms of processing, N-glycosylated.

Its subcellular location is the cell membrane. In terms of biological role, regulatory subunit of multiple voltage-gated sodium (Nav) channels directly mediating the depolarization of excitable membranes. Navs, also called VGSCs (voltage-gated sodium channels) or VDSCs (voltage-dependent sodium channels), operate by switching between closed and open conformations depending on the voltage difference across the membrane. In the open conformation they allow Na(+) ions to selectively pass through the pore, along their electrochemical gradient. The influx of Na+ ions provokes membrane depolarization, initiating the propagation of electrical signals throughout cells and tissues. The accessory beta subunits participate in localization and functional modulation of the Nav channels. Modulates the activity of SCN2A/Nav1.2, causing a hyperpolarizing shift in the voltage-dependence of inactivation of the channel and increasing the fraction of channels operating in the fast gating mode. Modulates the activity of SCN5A/Nav1.5. Could also regulate the atypical sodium channel SCN7A/Nav2.1. Modulates the activity of SCN10A/Nav1.8, regulating its oligomerization and accelerating the recovery from inactivation. This chain is Sodium channel regulatory subunit beta-3, found in Mus musculus (Mouse).